The chain runs to 693 residues: Exocyst complex component 7 (693 aa).

S236 bears the Phosphoserine mark. The tract at residues 236 to 259 is disordered; that stretch reads SWGHEALRPRHSGRQTEPKKTTSA.

The protein belongs to the EXO70 family. As to quaternary structure, the exocyst complex is composed of Sec3/Exoc1, Sec5/Exoc2, Sec6/Exoc3, Sec8/Exoc4, Sec10/Exoc5, Sec15/Exoc6, Exo70/Exoc7 and Exo84/Exoc8.

Required for exocytosis. Thought to function in intracellular vesicle targeting and docking before SNARE complex formation. This chain is Exocyst complex component 7, found in Drosophila melanogaster (Fruit fly).